The sequence spans 290 residues: 7-methylguanosine phosphate-specific 5'-nucleotidase B (290 aa).

Catalysis depends on Asp-39, which acts as the Nucleophile. The Mg(2+) site is built by Asp-39 and Asp-41. Asp-41 serves as the catalytic Proton donor. Position 86 (Glu-86) interacts with CMP. Glu-86 contacts N(7)-methyl-GMP. Residues 154-155 (SA) and Lys-203 each bind substrate. Asp-228 contributes to the Mg(2+) binding site.

Belongs to the pyrimidine 5'-nucleotidase family. In terms of assembly, monomer.

Its subcellular location is the cytoplasm. It carries out the reaction N(7)-methyl-GMP + H2O = N(7)-methylguanosine + phosphate. It catalyses the reaction CMP + H2O = cytidine + phosphate. The enzyme catalyses a ribonucleoside 5'-phosphate + H2O = a ribonucleoside + phosphate. Functionally, specifically hydrolyzes 7-methylguanosine monophosphate (m(7)GMP) to 7-methylguanosine and inorganic phosphate. The specific activity for m(7)GMP may protect cells against undesired salvage of m(7)GMP and its incorporation into nucleic acids. Also has weak activity for CMP. UMP and purine nucleotides are poor substrates. The protein is 7-methylguanosine phosphate-specific 5'-nucleotidase B (Nt5c3b-b) of Xenopus laevis (African clawed frog).